A 285-amino-acid polypeptide reads, in one-letter code: Small ribosomal subunit protein uS2 (285 aa).

The segment at 228–285 (RAGLSADKDAKPEAGAGEPLAEWEQELLSQAAPAAEAEAAPAAEAEAAPAAEAPATEA) is disordered. Low complexity predominate over residues 258–285 (AAPAAEAEAAPAAEAEAAPAAEAPATEA).

Belongs to the universal ribosomal protein uS2 family.

This Rhodococcus erythropolis (strain PR4 / NBRC 100887) protein is Small ribosomal subunit protein uS2.